Consider the following 282-residue polypeptide: Protoheme IX farnesyltransferase (282 aa).

9 helical membrane-spanning segments follow: residues 13-33, 36-56, 74-96, 101-120, 129-149, 156-176, 207-227, 232-252, and 261-281; these read VAGMVALSCVFGYLLAAGAAG, MVTSAAGTFLLTCACSVFNQI, ASGRLPTTAARAVGMAALLPALI, AGGVRLVLLSAAVLALYNGV, AFSLLAGAVPGALPPVFGWLA, SPEIALLFIVYYLWQVPHFWL, LWYASYMVALLLLPVFPFIAE, IAVCLAGITGLAASGYLLASP, and VSMLFVMLLLVVDRLVTSGII.

It belongs to the UbiA prenyltransferase family. Protoheme IX farnesyltransferase subfamily.

The protein localises to the cell inner membrane. It carries out the reaction heme b + (2E,6E)-farnesyl diphosphate + H2O = Fe(II)-heme o + diphosphate. It functions in the pathway porphyrin-containing compound metabolism; heme O biosynthesis; heme O from protoheme: step 1/1. Functionally, converts heme B (protoheme IX) to heme O by substitution of the vinyl group on carbon 2 of heme B porphyrin ring with a hydroxyethyl farnesyl side group. This is Protoheme IX farnesyltransferase from Oleidesulfovibrio alaskensis (strain ATCC BAA-1058 / DSM 17464 / G20) (Desulfovibrio alaskensis).